The primary structure comprises 127 residues: 13 kDa ribonucleoprotein-associated protein (127 aa).

It belongs to the eukaryotic ribosomal protein eL8 family. Component of the U3 snoRNP particle. Binds to the C'/D and B/C motifs in U3 snoRNA. Component of the 25S U4/U6.U5 tri-snRNP particle, a subcomplex of the spliceosome. Binds to the 5' stem-loop of U4 snRNA.

Its subcellular location is the nucleus. It localises to the nucleolus. In terms of biological role, common component of the spliceosome and rRNA processing machinery. In association with the spliceosomal U4/U6.U5 tri-snRNP particle, required for splicing of pre-mRNA. In association with box C/D snoRNPs, required for processing of pre-ribosomal RNA (rRNA) and site-specific 2'-O-methylation of substrate RNAs. Essential for the accumulation and stability of U4 snRNA, U6 snRNA, and box C/D snoRNAs. The sequence is that of 13 kDa ribonucleoprotein-associated protein (SNU13) from Cryptococcus neoformans var. neoformans serotype D (strain B-3501A) (Filobasidiella neoformans).